The primary structure comprises 93 residues: UPF0358 protein ABC2396 (93 aa).

It belongs to the UPF0358 family.

This is UPF0358 protein ABC2396 from Shouchella clausii (strain KSM-K16) (Alkalihalobacillus clausii).